Reading from the N-terminus, the 587-residue chain is L-ornithine N(5)-monooxygenase (587 aa).

FAD contacts are provided by residues Glu53–His61 and Gln72. Residue Lys77 participates in substrate binding. Gly235–Ser238 lines the NADP(+) pocket. Residues Asn282–Phe285 and Asn312 contribute to the substrate site. Asn312–Ser314 provides a ligand contact to NADP(+). Positions Asp488–Lys511 are disordered. Positions Ala491–Pro505 are enriched in polar residues. Position 567–569 (Thr567–Leu569) interacts with FAD. Ser570 lines the substrate pocket.

It belongs to the lysine N(6)-hydroxylase/L-ornithine N(5)-oxygenase family. As to quaternary structure, homotetramer. It depends on FAD as a cofactor.

It catalyses the reaction L-ornithine + NADPH + O2 = N(5)-hydroxy-L-ornithine + NADP(+) + H2O. The enzyme catalyses L-ornithine + NADH + O2 = N(5)-hydroxy-L-ornithine + NAD(+) + H2O. It participates in siderophore biosynthesis; ferrichrome biosynthesis. Its function is as follows. L-ornithine N(5)-monooxygenase; part of the siderophore biosynthetic pathway. Omphalotus olearius produces ferrichrome A, but no other siderophore has been detected. Ferrichrome A consists of a hexapeptide ring made up of one glycine, two serine, and three N(5)-hydroxyornithine amino acid residues, the latter acylated by trans-(alpha-methyl)-glutaconic acid residues. The biosynthesis of ferrichrome A depends on the hydroxylation of ornithine to N(5)-hydroxyornithine, catalyzed by the monooxygenase omo1. The second step, the acylation of N(5)-hydroxy-L-ornithine is probably catalyzed by the N-acyltransferase ato1. Finally, assembly of ferrichrome A is catalyzed by the nonribosomal peptide synthase (NRPS) fso1. The protein is L-ornithine N(5)-monooxygenase of Omphalotus olearius (Jack o'lantern).